The sequence spans 767 residues: Cullin-1 (767 aa).

Residues 699–760 enclose the Cullin neddylation domain; it reads DRKLLLQSAI…EKEYLERQGR (62 aa). A Glycyl lysine isopeptide (Lys-Gly) (interchain with G-Cter in NEDD8) cross-link involves residue Lys713.

This sequence belongs to the cullin family. As to quaternary structure, component of multiple Cul1-RING E3 ubiquitin-protein ligase complexes commonly known as SCF (SKP1-CUL1-F-box) complexes, consisting of cul1, skp1, pip1 and a variable F-box domain-containing protein as substrate-specific subunit. Binds to the pop1 homodimer, the pop2 homodimer and the pop1/pop2 heterodimer forming the SCF(pop1-pop2) complex. Interacts with pof3, pof14 and skp1. Neddylated; enhancing the ubiquitin-ligase activity.

The protein localises to the cytoplasm. The protein operates within protein modification; protein ubiquitination. Functionally, core component of multiple cullin-RING-based SCF (SKP1-CUL1-F-box protein) E3 ubiquitin-protein ligase complexes, which mediate the ubiquitination of target proteins. The functional specificity of the SCF complex depends on the F-box protein as substrate recognition component. SCF(pop1-pop2) is required for the maintenance of ploidy and directs ubiquitination of cig2. In Schizosaccharomyces pombe (strain 972 / ATCC 24843) (Fission yeast), this protein is Cullin-1 (cul1).